Consider the following 74-residue polypeptide: MNNLRVKDDFDYEDIMDEESLMDNMNEHGKTLVHTEFFNSFEDDFEDEFEEDSLKFNVKNDNNNNNNFKKPESK.

This is an uncharacterized protein from Dictyostelium discoideum (Social amoeba).